A 373-amino-acid chain; its full sequence is 3-isopropylmalate dehydrogenase gloI (373 aa).

Substrate-binding residues include Ser-92, Arg-98, and Arg-108. Mg(2+) contacts are provided by Asp-228, Asp-253, and Asp-257. Residues 294–300 and Asn-307 contribute to the NADP(+) site; that span reads HGSAPDI.

The protein belongs to the isocitrate and isopropylmalate dehydrogenases family. As to quaternary structure, homodimer. The cofactor is Mg(2+). Requires Mn(2+) as cofactor.

The enzyme catalyses (2R,3S)-3-isopropylmalate + NAD(+) = 4-methyl-2-oxopentanoate + CO2 + NADH. It functions in the pathway mycotoxin biosynthesis. In terms of biological role, 3-isopropylmalate dehydrogenase; part of the gene cluster that mediates the biosynthesis of pneumocandins, lipohexapeptides of the echinocandin family that prevent fungal cell wall formation by non-competitive inhibition of beta-1,3-glucan synthase. The 10,12-dimethylmyristoyl side chain is synthesized by the reducing polyketide synthase gloL/GLPKS4. The thioesterase gloN/GLHYD exclusively interacts with gloL/GLPKS4 to maintain turnover of the polyketide side chain. The 10R,12S-dimethylmyristic acid is then transferred to the first thiolation domain of the nonribosomal peptide synthetase gloA/GLNRPS4 by the acyl-AMP ligase gloD/GLligase, followed by its acylation to L-ornithine to trigger elongation of the cyclic hexapeptide. L-ornithine, 4R-hydroxyl-L-proline (generated from L-proline by the dioxygenase gloF/GLOXY2), 3S-hydroxyl-L-homotyrosine (generated by gloG/GLHtyB, gloH/GLHtyA, gloI/GLHtyC, gloJ/GLHtyD and hydroxylated at C-3 by the dioxygenase gloM/GLOXY1), 3R-hydroxyl-L-glutamine (generated from L-glutamine probably by the dioxygenase gloE/GLOXY3) and 3S-hydroxyl-L-proline (generated from L-proline by the dioxygenase gloF/GLOXY2 to yield pneumocandin B0), or 3S-hydroxyl-4S-methyl-L-proline (generated from L-leucine by the dioxygenase gloC/GLOXY4 to yield pneumocandin A0) are sequentially added to the growing chain. The last C domain of gloA/GLNRPS4 is proposed to be responsible for cyclization by condensation to form the peptide bond between L-ornithine and 3S-hydroxyl-4S-methyl-L-proline (for pneumocandin A0) or 3S-hydroxyl-L-proline (for pneumocandin B0). Finally, the subsequent C-4 hydroxylation of 3S-hydroxyl-L-homotyrosine and L-ornithine dihydroxylation at C-4 and C-5 are performed by the cytochrome P450 monooxygenases gloP/GLP450-1 and gloO/GLP450-2, respectively. The polypeptide is 3-isopropylmalate dehydrogenase gloI (Glarea lozoyensis (strain ATCC 20868 / MF5171)).